Consider the following 152-residue polypeptide: UPF0178 protein KPN78578_03210 (152 aa).

The protein belongs to the UPF0178 family.

The polypeptide is UPF0178 protein KPN78578_03210 (Klebsiella pneumoniae subsp. pneumoniae (strain ATCC 700721 / MGH 78578)).